The chain runs to 174 residues: MLDREGYRPNVGIILINERNEVFWGKRVREHSWQFPQGGIKPGESPETAMYRELYEEVGLLPQHVKIIGRTRDWLRYDVPNNWVRREWRGSYRGQKQIWYLLRLTGRDCDVNLRATRHPEFDGWRWHQYWAPVDEVIDFKRDVYLGALKELSSRFLRGMESYEDFAARQSSDNR.

The Nudix hydrolase domain occupies 6–149 (GYRPNVGIIL…KRDVYLGALK (144 aa)). The Nudix box signature appears at 38-59 (GGIKPGESPETAMYRELYEEVG).

The protein belongs to the Nudix hydrolase family. RppH subfamily. A divalent metal cation serves as cofactor.

Accelerates the degradation of transcripts by removing pyrophosphate from the 5'-end of triphosphorylated RNA, leading to a more labile monophosphorylated state that can stimulate subsequent ribonuclease cleavage. This chain is RNA pyrophosphohydrolase, found in Neisseria meningitidis serogroup A / serotype 4A (strain DSM 15465 / Z2491).